The primary structure comprises 484 residues: MIIIVIVVFLFYFSFLNLNLNPKKKRPPSPITLPVIGNLISLLNNQPQNILFNYYKKYGKIYQLQYGIVNTVVLSEFDILKEAFIENGEVFIERYNKITKKFKSSENIVNSNGLIWKKLQSISIQELSPNIKIKKYEPMIINETNKLIDSFNEHIKSNESIDPTLNIKICFLNIIISFLFNFRYNDYKDEKVIQLVDYIHSIFRMGSHPIPQDYIPILNKFYINKTTKIHQKIFENIYEYIENQVQKRLEILNKNNNNNNNNINECFVDLLLLKFKSNLLTWNEVIKTTTDLMIAGSDTNSLFTIHLIIALTNRENIQNKVFNEILNFYILNENNKITFSNKSKTPYYNSVLKEVERRFTVSPLSQPHRTNKDIILNGYFIPSGSQIIQNVYSCHLNDKDWENPFQFNPDRFLNNNQLEKKLITFGMGPRNCLGFQFALMSIWIVNLILFKSIKFSSNKLIEEEIREGGTTLSPFPFKINLIKR.

Residues 1–21 (MIIIVIVVFLFYFSFLNLNLN) form a helical membrane-spanning segment. Cys432 serves as a coordination point for heme.

It belongs to the cytochrome P450 family. It depends on heme as a cofactor.

The protein resides in the membrane. The chain is Probable cytochrome P450 555A1 (cyp555A1) from Dictyostelium discoideum (Social amoeba).